The chain runs to 248 residues: Ubiquinone/menaquinone biosynthesis C-methyltransferase UbiE (248 aa).

Positions 68 and 92 each coordinate S-adenosyl-L-methionine.

This sequence belongs to the class I-like SAM-binding methyltransferase superfamily. MenG/UbiE family.

It catalyses the reaction a 2-demethylmenaquinol + S-adenosyl-L-methionine = a menaquinol + S-adenosyl-L-homocysteine + H(+). The enzyme catalyses a 2-methoxy-6-(all-trans-polyprenyl)benzene-1,4-diol + S-adenosyl-L-methionine = a 5-methoxy-2-methyl-3-(all-trans-polyprenyl)benzene-1,4-diol + S-adenosyl-L-homocysteine + H(+). It functions in the pathway quinol/quinone metabolism; menaquinone biosynthesis; menaquinol from 1,4-dihydroxy-2-naphthoate: step 2/2. It participates in cofactor biosynthesis; ubiquinone biosynthesis. Methyltransferase required for the conversion of demethylmenaquinol (DMKH2) to menaquinol (MKH2) and the conversion of 2-polyprenyl-6-methoxy-1,4-benzoquinol (DDMQH2) to 2-polyprenyl-3-methyl-6-methoxy-1,4-benzoquinol (DMQH2). The chain is Ubiquinone/menaquinone biosynthesis C-methyltransferase UbiE from Rickettsia massiliae (strain Mtu5).